The following is a 430-amino-acid chain: Enolase (430 aa).

Residue glutamine 163 participates in (2R)-2-phosphoglycerate binding. Glutamate 205 acts as the Proton donor in catalysis. Mg(2+)-binding residues include aspartate 242, glutamate 285, and aspartate 312. (2R)-2-phosphoglycerate is bound by residues lysine 337, arginine 366, serine 367, and lysine 388. Catalysis depends on lysine 337, which acts as the Proton acceptor.

The protein belongs to the enolase family. It depends on Mg(2+) as a cofactor.

It localises to the cytoplasm. Its subcellular location is the secreted. It is found in the cell surface. The enzyme catalyses (2R)-2-phosphoglycerate = phosphoenolpyruvate + H2O. Its pathway is carbohydrate degradation; glycolysis; pyruvate from D-glyceraldehyde 3-phosphate: step 4/5. Functionally, catalyzes the reversible conversion of 2-phosphoglycerate (2-PG) into phosphoenolpyruvate (PEP). It is essential for the degradation of carbohydrates via glycolysis. In Bifidobacterium animalis subsp. lactis (strain AD011), this protein is Enolase.